A 466-amino-acid chain; its full sequence is Cysteine--tRNA ligase (466 aa).

Cys-27 contributes to the Zn(2+) binding site. Residues 29–39 (PTVYDLAHIGN) carry the 'HIGH' region motif. Residues Cys-211, His-236, and Glu-240 each contribute to the Zn(2+) site. Residues 270 to 274 (KMSKS) carry the 'KMSKS' region motif. Position 273 (Lys-273) interacts with ATP.

This sequence belongs to the class-I aminoacyl-tRNA synthetase family. In terms of assembly, monomer. Zn(2+) is required as a cofactor.

The protein resides in the cytoplasm. It catalyses the reaction tRNA(Cys) + L-cysteine + ATP = L-cysteinyl-tRNA(Cys) + AMP + diphosphate. The polypeptide is Cysteine--tRNA ligase (Anaplasma marginale (strain St. Maries)).